The following is a 306-amino-acid chain: Phosphatidate cytidylyltransferase (306 aa).

The disordered stretch occupies residues 1–28 (MTTNDAGTGNPAEQPARGAKQQPATETS). A run of 8 helical transmembrane segments spans residues 36 to 56 (AAIV…VFVP), 82 to 102 (GYLI…WLTW), 103 to 123 (PFGA…CMIW), 151 to 171 (ATVF…MLVY), 180 to 200 (FCMM…GVLF), 218 to 238 (FAGS…FLVG), 241 to 261 (PWIG…GDLV), and 285 to 305 (MDRL…LTLL).

The protein belongs to the CDS family.

Its subcellular location is the cell membrane. The catalysed reaction is a 1,2-diacyl-sn-glycero-3-phosphate + CTP + H(+) = a CDP-1,2-diacyl-sn-glycerol + diphosphate. It participates in phospholipid metabolism; CDP-diacylglycerol biosynthesis; CDP-diacylglycerol from sn-glycerol 3-phosphate: step 3/3. The sequence is that of Phosphatidate cytidylyltransferase (cdsA) from Mycobacterium bovis (strain ATCC BAA-935 / AF2122/97).